Here is a 466-residue protein sequence, read N- to C-terminus: Putative D-3-phosphoglycerate dehydrogenase (466 aa).

Over residues 1–15 (MDIKGGRRGNVEDSL) the composition is skewed to basic and acidic residues. Positions 1–26 (MDIKGGRRGNVEDSLNKLSLSPPDNN) are disordered. Over residues 16–26 (NKLSLSPPDNN) the composition is skewed to polar residues. Serine 87 is modified (phosphoserine). Residues 205 to 206 (HI) and aspartate 225 each bind NAD(+). Serine 258 is subject to Phosphoserine. Residues 282 to 284 (ASR) and aspartate 308 contribute to the NAD(+) site. The active site involves arginine 284. Residue glutamate 313 is part of the active site. The active-site Proton donor is the histidine 344. Residue 344-347 (HIGG) participates in NAD(+) binding. In terms of domain architecture, ACT spans 396-466 (RVLFVHRNVP…PCKINTRLLY (71 aa)).

This sequence belongs to the D-isomer specific 2-hydroxyacid dehydrogenase family.

The enzyme catalyses (2R)-3-phosphoglycerate + NAD(+) = 3-phosphooxypyruvate + NADH + H(+). It carries out the reaction (R)-2-hydroxyglutarate + NAD(+) = 2-oxoglutarate + NADH + H(+). Its pathway is amino-acid biosynthesis; L-serine biosynthesis; L-serine from 3-phospho-D-glycerate: step 1/3. In terms of biological role, catalyzes the reversible oxidation of 3-phospho-D-glycerate to 3-phosphonooxypyruvate, the first step of the phosphorylated L-serine biosynthesis pathway. Also catalyzes the reversible oxidation of 2-hydroxyglutarate to 2-oxoglutarate. The protein is Putative D-3-phosphoglycerate dehydrogenase of Schizosaccharomyces pombe (strain 972 / ATCC 24843) (Fission yeast).